A 1450-amino-acid chain; its full sequence is DNA-directed RNA polymerase RPB1 homolog (1450 aa).

It belongs to the RNA polymerase beta' chain family. Part of the viral DNA-directed RNA polymerase that consists of 8 polII-like subunits (RPB1, RPB2, RPB3, RPB5, RPB6, RPB7, RPB9, RPB10), a capping enzyme and a termination factor.

The protein localises to the virion. It catalyses the reaction RNA(n) + a ribonucleoside 5'-triphosphate = RNA(n+1) + diphosphate. In terms of biological role, catalytic component of the DNA-directed RNA polymerase (RNAP) that catalyzes the transcription in the cytoplasm of viral DNA into RNA using the four ribonucleoside triphosphates as substrates. Forms the polymerase active center together with RPB2. Part of the core element with the central large cleft, the clamp element that moves to open and close the cleft and the jaws that are thought to grab the incoming DNA template. The polypeptide is DNA-directed RNA polymerase RPB1 homolog (Ornithodoros (relapsing fever ticks)).